Reading from the N-terminus, the 469-residue chain is Argininosuccinate lyase (469 aa).

The protein belongs to the lyase 1 family. Argininosuccinate lyase subfamily.

The protein localises to the cytoplasm. The enzyme catalyses 2-(N(omega)-L-arginino)succinate = fumarate + L-arginine. It participates in amino-acid biosynthesis; L-arginine biosynthesis; L-arginine from L-ornithine and carbamoyl phosphate: step 3/3. The chain is Argininosuccinate lyase from Burkholderia vietnamiensis (strain G4 / LMG 22486) (Burkholderia cepacia (strain R1808)).